The sequence spans 173 residues: NADH-ubiquinone oxidoreductase chain 6 (173 aa).

The next 5 membrane-spanning stretches (helical) occupy residues 1–21, 27–47, 48–68, 87–107, and 139–159; these read MTYFVMFLGFCFILGAVAVAS, YGVLGLVVGSVVGCGWLLSLG, VSFISLALFLVYLGGMLVVFV, VVIYGVGLVLVVLVGIVVGDF, and WGAGLFLVAGWGLLLTLFVVL.

This sequence belongs to the complex I subunit 6 family.

The protein resides in the mitochondrion membrane. It carries out the reaction a ubiquinone + NADH + 5 H(+)(in) = a ubiquinol + NAD(+) + 4 H(+)(out). Core subunit of the mitochondrial membrane respiratory chain NADH dehydrogenase (Complex I) that is believed to belong to the minimal assembly required for catalysis. Complex I functions in the transfer of electrons from NADH to the respiratory chain. The immediate electron acceptor for the enzyme is believed to be ubiquinone. The sequence is that of NADH-ubiquinone oxidoreductase chain 6 (MT-ND6) from Struthio camelus (Common ostrich).